Here is a 504-residue protein sequence, read N- to C-terminus: Maturase K (504 aa).

The protein belongs to the intron maturase 2 family. MatK subfamily.

The protein localises to the plastid. The protein resides in the chloroplast. Its function is as follows. Usually encoded in the trnK tRNA gene intron. Probably assists in splicing its own and other chloroplast group II introns. The sequence is that of Maturase K from Adenostoma fasciculatum (Chamise).